The primary structure comprises 267 residues: DNA repair protein RecO (267 aa).

Belongs to the RecO family.

Involved in DNA repair and RecF pathway recombination. The polypeptide is DNA repair protein RecO (Moorella thermoacetica (strain ATCC 39073 / JCM 9320)).